Reading from the N-terminus, the 488-residue chain is Bifunctional protein GlmU (488 aa).

A pyrophosphorylase region spans residues Met1–Arg237. Residues Leu13–Gly16, Lys27, Gln82, Gly87–Thr88, Ser110–Asp112, Gly149, Glu164, Asn179, and Asn235 each bind UDP-N-acetyl-alpha-D-glucosamine. A Mg(2+)-binding site is contributed by Asp112. Residue Asn235 participates in Mg(2+) binding. The segment at Ile238 to Ala258 is linker. Residues Gly259–Ser488 are N-acetyltransferase. Residues Arg341 and Lys359 each coordinate UDP-N-acetyl-alpha-D-glucosamine. Catalysis depends on His371, which acts as the Proton acceptor. UDP-N-acetyl-alpha-D-glucosamine contacts are provided by Tyr374 and Asn385. Acetyl-CoA is bound by residues Ala388, Asn394–Tyr395, Ser413, Ala431, and Arg448. Residues Ala459 to Ser488 form a disordered region. Over residues Arg478–Ser488 the composition is skewed to basic residues.

The protein in the N-terminal section; belongs to the N-acetylglucosamine-1-phosphate uridyltransferase family. In the C-terminal section; belongs to the transferase hexapeptide repeat family. As to quaternary structure, homotrimer. The cofactor is Mg(2+).

Its subcellular location is the cytoplasm. It catalyses the reaction alpha-D-glucosamine 1-phosphate + acetyl-CoA = N-acetyl-alpha-D-glucosamine 1-phosphate + CoA + H(+). It carries out the reaction N-acetyl-alpha-D-glucosamine 1-phosphate + UTP + H(+) = UDP-N-acetyl-alpha-D-glucosamine + diphosphate. Its pathway is nucleotide-sugar biosynthesis; UDP-N-acetyl-alpha-D-glucosamine biosynthesis; N-acetyl-alpha-D-glucosamine 1-phosphate from alpha-D-glucosamine 6-phosphate (route II): step 2/2. It functions in the pathway nucleotide-sugar biosynthesis; UDP-N-acetyl-alpha-D-glucosamine biosynthesis; UDP-N-acetyl-alpha-D-glucosamine from N-acetyl-alpha-D-glucosamine 1-phosphate: step 1/1. The protein operates within bacterial outer membrane biogenesis; LPS lipid A biosynthesis. Functionally, catalyzes the last two sequential reactions in the de novo biosynthetic pathway for UDP-N-acetylglucosamine (UDP-GlcNAc). The C-terminal domain catalyzes the transfer of acetyl group from acetyl coenzyme A to glucosamine-1-phosphate (GlcN-1-P) to produce N-acetylglucosamine-1-phosphate (GlcNAc-1-P), which is converted into UDP-GlcNAc by the transfer of uridine 5-monophosphate (from uridine 5-triphosphate), a reaction catalyzed by the N-terminal domain. This is Bifunctional protein GlmU from Anaeromyxobacter dehalogenans (strain 2CP-C).